A 96-amino-acid polypeptide reads, in one-letter code: Pore-forming peptide amoebapore B (96 aa).

The signal sequence occupies residues 1 to 19; the sequence is MRAIIFVLIFAIAFAATRE. The Saposin B-type domain occupies 20-96; that stretch reads GAILCNLCKD…VVVCEKIHAC (77 aa). Intrachain disulfides connect cysteine 24-cysteine 96, cysteine 27-cysteine 90, and cysteine 54-cysteine 65.

As to quaternary structure, monomer. Homodimer. Hexamer; formed during insertion in the membrane.

Its subcellular location is the cytoplasmic granule. Functionally, forms pores in the cell membrane of host cells. Has antibacterial activity against M.luteus, no activity against E.coli. Implicated in the cytolytic activity of the parasite. The chain is Pore-forming peptide amoebapore B from Entamoeba histolytica (strain ATCC 30459 / HM-1:IMSS / ABRM).